A 742-amino-acid polypeptide reads, in one-letter code: 2'-5'-oligoadenylate synthase 2 (742 aa).

The interval 1–35 (MGNWLTGNWSSDRSSGYSSGWSPGGSSGVPSGPVH) is disordered. The N-myristoyl glycine moiety is linked to residue glycine 2. Over residues 10–21 (SSDRSSGYSSGW) the composition is skewed to low complexity. 2 OAS domain regions span residues 60–374 (VPSQ…YWDV) and 382–721 (TPSH…WKVP). Lysine 417 carries the N6-acetyllysine modification. Residue serine 436 participates in ATP binding. Mg(2+) contacts are provided by aspartate 448, aspartate 450, and aspartate 519. ATP-binding residues include arginine 582 and lysine 585.

The protein belongs to the 2-5A synthase family. Homodimer. Mg(2+) is required as a cofactor. In terms of processing, myristoylation is not essential for its activity. Glycosylated. Glycosylation is essential for its activity. In terms of tissue distribution, expressed in the uterus. Expressed in mammary glands: expressed at low level before the establishment of lactation, then expression strongly increases, and subsequently decreases during early involution.

Its subcellular location is the cytoplasm. The protein localises to the perinuclear region. It carries out the reaction 3 ATP = 5'-triphosphoadenylyl-(2'-&gt;5')-adenylyl-(2'-&gt;5')-adenosine + 2 diphosphate. With respect to regulation, produced as a latent enzyme which is activated by double stranded RNA (dsRNA) generated during the course of viral infection. The dsRNA activator must be at least 15 nucleotides long, and no modification of the 2'-hydroxyl group is tolerated. ssRNA or dsDNA do not act as activators. Strongly inhibited by copper, iron and zinc ions. Partially inhibited by cobalt and nickel ions. Its function is as follows. Interferon-induced, dsRNA-activated antiviral enzyme which plays a critical role in cellular innate antiviral response. Activated by detection of double stranded RNA (dsRNA): polymerizes higher oligomers of 2'-5'-oligoadenylates (2-5A) from ATP which then bind to the inactive monomeric form of ribonuclease L (RNASEL) leading to its dimerization and subsequent activation. Activation of RNASEL leads to degradation of cellular as well as viral RNA, resulting in the inhibition of protein synthesis, thus terminating viral replication. Can mediate the antiviral effect via the classical RNASEL-dependent pathway or an alternative antiviral pathway independent of RNASEL. In addition, it may also play a role in other cellular processes such as apoptosis, cell growth, differentiation and gene regulation. May act as a negative regulator of lactation, stopping lactation in virally infected mammary gland lobules, thereby preventing transmission of viruses to neonates. Non-infected lobules would not be affected, allowing efficient pup feeding during infection. The chain is 2'-5'-oligoadenylate synthase 2 from Mus musculus (Mouse).